We begin with the raw amino-acid sequence, 193 residues long: Potassium-transporting ATPase KdpC subunit (193 aa).

Residues 11–31 traverse the membrane as a helical segment; sequence FTLVFMVLLGLVYPFVMTGIA.

It belongs to the KdpC family. As to quaternary structure, the system is composed of three essential subunits: KdpA, KdpB and KdpC.

It localises to the cell membrane. Part of the high-affinity ATP-driven potassium transport (or Kdp) system, which catalyzes the hydrolysis of ATP coupled with the electrogenic transport of potassium into the cytoplasm. This subunit acts as a catalytic chaperone that increases the ATP-binding affinity of the ATP-hydrolyzing subunit KdpB by the formation of a transient KdpB/KdpC/ATP ternary complex. In Caldanaerobacter subterraneus subsp. tengcongensis (strain DSM 15242 / JCM 11007 / NBRC 100824 / MB4) (Thermoanaerobacter tengcongensis), this protein is Potassium-transporting ATPase KdpC subunit.